A 289-amino-acid polypeptide reads, in one-letter code: CRISPR-associated endoribonuclease Cas6 2 (289 aa).

It belongs to the CRISPR-associated endoribonuclease Cas6 family. Possibly part of the aCascade ribonucleoprotein complex. Mg(2+) serves as cofactor.

In terms of biological role, CRISPR (clustered regularly interspaced short palindromic repeat) is an adaptive immune system that provides protection against mobile genetic elements (viruses, transposable elements and conjugative plasmids). CRISPR clusters contain sequences complementary to antecedent mobile elements and target invading nucleic acids. CRISPR clusters are transcribed and processed into CRISPR RNA (crRNA). Functions as a ssRNA-specific endoribonuclease, generating an 8 base-long tag known as the 5' handle. This Saccharolobus solfataricus (strain ATCC 35092 / DSM 1617 / JCM 11322 / P2) (Sulfolobus solfataricus) protein is CRISPR-associated endoribonuclease Cas6 2 (cas6b).